Here is a 480-residue protein sequence, read N- to C-terminus: GPI-anchored wall transfer protein 1 (480 aa).

A run of 11 helical transmembrane segments spans residues 20–40 (IAEI…WQLL), 47–67 (VPLV…ITVY), 70–90 (DPVL…QILG), 114–134 (PFIT…ILAV), 153–173 (LMDL…ASAL), 186–208 (WSRL…ARLV), 228–248 (FFFT…ICTY), 252–272 (VFIA…EGFL), 291–311 (ILSF…GFYV), 343–363 (WTSV…VALF), and 381–401 (LPYV…YCMV). N-linked (GlcNAc...) asparagine glycosylation occurs at N406. The next 2 membrane-spanning stretches (helical) occupy residues 426–446 (LFVF…MNTL) and 450–470 (LTVQ…VAII).

This sequence belongs to the PIGW family.

The protein resides in the endoplasmic reticulum membrane. It participates in glycolipid biosynthesis; glycosylphosphatidylinositol-anchor biosynthesis. Probable acetyltransferase, which acetylates the inositol ring of phosphatidylinositol during biosynthesis of GPI-anchor. This chain is GPI-anchored wall transfer protein 1 (GWT1), found in Eremothecium gossypii (strain ATCC 10895 / CBS 109.51 / FGSC 9923 / NRRL Y-1056) (Yeast).